The chain runs to 137 residues: Large ribosomal subunit protein uL16 (137 aa).

The protein belongs to the universal ribosomal protein uL16 family. As to quaternary structure, part of the 50S ribosomal subunit.

Binds 23S rRNA and is also seen to make contacts with the A and possibly P site tRNAs. This Chelativorans sp. (strain BNC1) protein is Large ribosomal subunit protein uL16.